The sequence spans 137 residues: Large ribosomal subunit protein uL16c (137 aa).

Belongs to the universal ribosomal protein uL16 family. Part of the 50S ribosomal subunit.

It is found in the plastid. This is Large ribosomal subunit protein uL16c from Cuscuta exaltata (Tall dodder).